The primary structure comprises 503 residues: ATP-dependent RNA helicase dbp3 (503 aa).

Basic and acidic residues predominate over residues 1–25 (MAKRVQHEGGDYRPQKRSKNERNGE). The interval 1–35 (MAKRVQHEGGDYRPQKRSKNERNGEGSKVSPSAEA) is disordered. The Q motif signature appears at 104–112 (SFSSPTPIQ). In terms of domain architecture, Helicase ATP-binding spans 116–292 (WPLLFAGRDV…ATFMTSAVTV (177 aa)). 129–136 (AETGSGKT) is a binding site for ATP. Positions 239–242 (DEAD) match the DEAD box motif. One can recognise a Helicase C-terminal domain in the interval 307–472 (RIKQVVEVVK…DVPDALLKFG (166 aa)).

The protein belongs to the DEAD box helicase family. DDX5/DBP2 subfamily.

It localises to the nucleus. The protein resides in the nucleolus. The catalysed reaction is ATP + H2O = ADP + phosphate + H(+). Functionally, ATP-dependent RNA helicase required for 60S ribosomal subunit synthesis. Involved in efficient pre-rRNA processing, predominantly at site A3, which is necessary for the normal formation of 25S and 5.8S rRNAs. This is ATP-dependent RNA helicase dbp3 (dbp3) from Neosartorya fischeri (strain ATCC 1020 / DSM 3700 / CBS 544.65 / FGSC A1164 / JCM 1740 / NRRL 181 / WB 181) (Aspergillus fischerianus).